Consider the following 505-residue polypeptide: Metalloprotease TIKI1 (505 aa).

An N-terminal signal peptide occupies residues 1 to 19; the sequence is MSPWSWFLLQTLCLLPTGA. The Extracellular segment spans residues 20 to 477; the sequence is ASRRGAPGTA…RRGHSHHSQM (458 aa). N-linked (GlcNAc...) asparagine glycans are attached at residues Asn-220, Asn-229, Asn-278, and Asn-336. The interval 389 to 428 is disordered; it reads PEAVSSGHSTLPPLVSRPGSADTPSEAEQRFRKKRRRSQR. Residues 419 to 428 are compositionally biased toward basic residues; that stretch reads FRKKRRRSQR. The chain crosses the membrane as a helical span at residues 478–498; it reads VASSACLSLWTPVFWVLVLAF. Residues 499-505 lie on the Cytoplasmic side of the membrane; the sequence is QTETPLL.

It belongs to the TIKI family. Mn(2+) serves as cofactor. The cofactor is Co(2+).

The protein resides in the cell membrane. Metalloprotease that acts as a negative regulator of the Wnt signaling pathway by mediating the cleavage of the 8 N-terminal residues of a subset of Wnt proteins. Following cleavage, Wnt proteins become oxidized and form large disulfide-bond oligomers, leading to their inactivation. Able to cleave WNT3A, WNT5, but not WNT11. Required for head formation. The protein is Metalloprotease TIKI1 (TRABD2A) of Homo sapiens (Human).